A 225-amino-acid polypeptide reads, in one-letter code: Acidic leucine-rich nuclear phosphoprotein 32-related protein 2 (225 aa).

LRR repeat units lie at residues 39–60, 61–82, and 87–107; these read KLEL…PVLP, ALNY…DVLI, and EIKK…RTLK. An LRRCT domain is found at 121-161; the sequence is SSLGLLDDYRVKMFEMIPSLKILDGCDVDGEEVEEEFAAGE. Residues 155 to 175 show a composition bias toward acidic residues; it reads EEFAAGEGAEDSDEGDSDEDG. The interval 155–225 is disordered; sequence EEFAAGEGAE…DEPEAKKSAE (71 aa).

It belongs to the ANP32 family.

This chain is Acidic leucine-rich nuclear phosphoprotein 32-related protein 2, found in Caenorhabditis elegans.